The following is a 204-amino-acid chain: DNA-directed RNA polymerase III subunit RPC8 (204 aa).

The interval 158 to 178 (VDTSPTGPSSAEAASSSEELP) is disordered. A compositionally biased stretch (low complexity) spans 166-175 (SSAEAASSSE).

The protein belongs to the eukaryotic RPB7/RPC8 RNA polymerase subunit family. Component of the RNA polymerase III complex consisting of 17 subunits: a ten-subunit horseshoe-shaped catalytic core composed of POLR3A/RPC1, POLR3B/RPC2, POLR1C/RPAC1, POLR1D/RPAC2, POLR3K/RPC10, POLR2E/RPABC1, POLR2F/RPABC2, POLR2H/RPABC3, POLR2K/RPABC4 and POLR2L/RPABC5; a mobile stalk composed of two subunits POLR3H/RPC8 and CRCP/RPC9, protruding from the core and functioning primarily in transcription initiation; and additional subunits homologous to general transcription factors of the RNA polymerase II machinery, POLR3C/RPC3-POLR3F/RPC6-POLR3G/RPC7 heterotrimer required for transcription initiation and POLR3D/RPC4-POLR3E/RPC5 heterodimer involved in both transcription initiation and termination. Interacts with CRCP/RPC9. POLR3H/RPC8 and CRCP/RPC9 probably form a Pol III subcomplex.

It localises to the nucleus. In terms of biological role, DNA-dependent RNA polymerase catalyzes the transcription of DNA into RNA using the four ribonucleoside triphosphates as substrates. Specific peripheric component of RNA polymerase III (Pol III) which synthesizes small non-coding RNAs including 5S rRNA, snRNAs, tRNAs and miRNAs from at least 500 distinct genomic loci. With CRCP/RPC9 forms a mobile stalk that protrudes from Pol III core and functions primarily in transcription initiation. Pol III plays a key role in sensing and limiting infection by intracellular bacteria and DNA viruses. Acts as nuclear and cytosolic DNA sensor involved in innate immune response. Can sense non-self dsDNA that serves as template for transcription into dsRNA. The non-self RNA polymerase III transcripts, such as Epstein-Barr virus-encoded RNAs (EBERs) induce type I interferon and NF-kappa-B through the RIG-I pathway. The protein is DNA-directed RNA polymerase III subunit RPC8 (POLR3H) of Bos taurus (Bovine).